A 174-amino-acid chain; its full sequence is MTQTIFMVGARGAGKTTIGKALAQALGYRFVDTDLFMQQTSQMTVAEVVESEGWDGFRLRESMALQAVTAPKTVVATGGGAVLSSENRAFMRDHGRVIYLRASAAVLAKRLAEDPEEAQRPSLTGKPIVEEILDVLASREALYQDVAHHVLDGTQTPSLVVEQILQMLTGEMVK.

Residue 12 to 17 (GAGKTT) coordinates ATP. Mg(2+) is bound by residues Thr16 and Asp32. Residues Asp34, Arg58, and Gly79 each contribute to the substrate site. The tract at residues 112–126 (AEDPEEAQRPSLTGK) is LID domain. Arg120 is a binding site for ATP. Arg139 contributes to the substrate binding site. Gln155 contributes to the ATP binding site.

This sequence belongs to the shikimate kinase family. AroL subfamily. Monomer. Mg(2+) is required as a cofactor.

The protein localises to the cytoplasm. The enzyme catalyses shikimate + ATP = 3-phosphoshikimate + ADP + H(+). The protein operates within metabolic intermediate biosynthesis; chorismate biosynthesis; chorismate from D-erythrose 4-phosphate and phosphoenolpyruvate: step 5/7. In terms of biological role, catalyzes the specific phosphorylation of the 3-hydroxyl group of shikimic acid using ATP as a cosubstrate. This chain is Shikimate kinase 2, found in Yersinia pestis bv. Antiqua (strain Antiqua).